A 228-amino-acid polypeptide reads, in one-letter code: Translin (228 aa).

The interval 86 to 90 (RFHEH) is DNA/RNA binding. The tract at residues 177-198 (LDSGFRLLNLKNDSLRKRYDGL) is leucine-zipper. Lys-187 carries the N6-acetyllysine modification. Ser-190 is modified (phosphoserine). Lys-199 is modified (N6-acetyllysine).

Belongs to the translin family. Ring-shaped heterooctamer of six TSN and two TSNAX subunits, DNA/RNA binding occurs inside the ring.

It is found in the cytoplasm. It localises to the nucleus. Functionally, DNA-binding protein that specifically recognizes consensus sequences at the breakpoint junctions in chromosomal translocations, mostly involving immunoglobulin (Ig)/T-cell receptor gene segments. Seems to recognize single-stranded DNA ends generated by staggered breaks occurring at recombination hot spots. Its function is as follows. Exhibits both single-stranded and double-stranded endoribonuclease activity. May act as an activator of RNA-induced silencing complex (RISC) by facilitating endonucleolytic cleavage of the siRNA passenger strand. This is Translin (TSN) from Bos taurus (Bovine).